A 272-amino-acid chain; its full sequence is Phosphate import ATP-binding protein PstB (272 aa).

The region spanning 18–257 is the ABC transporter domain; that stretch reads VSIQNATISY…FNDTDKIFNA (240 aa). Position 50-57 (50-57) interacts with ATP; the sequence is GPSGCGKS.

It belongs to the ABC transporter superfamily. Phosphate importer (TC 3.A.1.7) family. The complex is composed of two ATP-binding proteins (PstB), two transmembrane proteins (PstC and PstA) and a solute-binding protein (PstS).

The protein resides in the cell inner membrane. The enzyme catalyses phosphate(out) + ATP + H2O = ADP + 2 phosphate(in) + H(+). Functionally, part of the ABC transporter complex PstSACB involved in phosphate import. Responsible for energy coupling to the transport system. The chain is Phosphate import ATP-binding protein PstB from Synechococcus sp. (strain CC9311).